The primary structure comprises 156 residues: Ribosome maturation factor RimP (156 aa).

Belongs to the RimP family.

It localises to the cytoplasm. Required for maturation of 30S ribosomal subunits. The sequence is that of Ribosome maturation factor RimP from Gloeobacter violaceus (strain ATCC 29082 / PCC 7421).